The sequence spans 839 residues: Probable inorganic carbon transporter subunit DabA (839 aa).

Residues Cys-353, Asp-355, His-537, and Cys-552 each coordinate Zn(2+).

This sequence belongs to the inorganic carbon transporter (TC 9.A.2) DabA family. In terms of assembly, forms a complex with DabB. The cofactor is Zn(2+).

Its subcellular location is the cell membrane. Functionally, part of an energy-coupled inorganic carbon pump. The chain is Probable inorganic carbon transporter subunit DabA from Chloroflexus aggregans (strain MD-66 / DSM 9485).